The primary structure comprises 91 residues: MPLHKSAEKRLRQSARRNERNRARKKELKVLLKNVQKLIDTNADQGEVEAAYRSAVQKLDRLGVKRYIHPNKASRKKSQLSRMLNAYAQKD.

The segment covering Met1 to Asn21 has biased composition (basic and acidic residues). Disordered stretches follow at residues Met1–Lys25 and Asn71–Asp91.

This sequence belongs to the bacterial ribosomal protein bS20 family.

Its function is as follows. Binds directly to 16S ribosomal RNA. In Prosthecochloris aestuarii (strain DSM 271 / SK 413), this protein is Small ribosomal subunit protein bS20.